The following is a 318-amino-acid chain: uncharacterized protein (318 aa).

The segment at 19–63 (VPPDARHHEPRPGMTDHPDTGNGIGLTGRPPRAIPDPAPRSSHGP) is disordered. Over residues 21-37 (PDARHHEPRPGMTDHPD) the composition is skewed to basic and acidic residues. Residue 72–79 (QKGGVGKT) coordinates ATP.

The protein belongs to the ParA family.

Functionally, may play a role in septum formation. This is an uncharacterized protein from Mycobacterium tuberculosis (strain CDC 1551 / Oshkosh).